Reading from the N-terminus, the 304-residue chain is tRNA pseudouridine synthase B (304 aa).

The Nucleophile role is filled by aspartate 38.

Belongs to the pseudouridine synthase TruB family. Type 1 subfamily.

The catalysed reaction is uridine(55) in tRNA = pseudouridine(55) in tRNA. Functionally, responsible for synthesis of pseudouridine from uracil-55 in the psi GC loop of transfer RNAs. The sequence is that of tRNA pseudouridine synthase B from Listeria welshimeri serovar 6b (strain ATCC 35897 / DSM 20650 / CCUG 15529 / CIP 8149 / NCTC 11857 / SLCC 5334 / V8).